The following is a 254-amino-acid chain: Claudin-16 (254 aa).

Residues 1–22 (MGPGLAASHVSFPDSLLAKMRD) lie on the Cytoplasmic side of the membrane. The helical transmembrane segment at 23–43 (LLQYVACFFAFFSAGFLVVAT) threads the bilayer. Residues 44-98 (WTDCWMVNADDSLEVSTKCRGLWWECVTNAFDGIRTCDEYDSILAEHSLKLVVTR) are Extracellular-facing. Residues 99–119 (ALMITADILAGFGFITLLLGL) traverse the membrane as a helical segment. At 120–134 (DCVKFLPDEPYIKVR) the chain is on the cytoplasmic side. A helical transmembrane segment spans residues 135–155 (ISFVAGTTLLIAGAPGIIGSV). The Extracellular portion of the chain corresponds to 156–188 (WYAVDVYVERSSLVLHNIFLGIQYKFGWSCWLG). Residues 189-209 (MAGSLGCFLAGAILTCCLYLF) traverse the membrane as a helical segment. Over 210–254 (KDVGPERSYPYSTRKAYSTTAVSMPRSHAIPRTQTAKMYAVDTRV) the chain is Cytoplasmic. Residues 252-254 (TRV) carry the Interaction with TJP1 motif.

Belongs to the claudin family. As to quaternary structure, can form heteropolymeric tight junction strands with other claudins. Interacts with CLDN19. Interacts (via PDZ-binding motif TRV) with TJP1 (via PDZ domain). Cannot form tight junction strands on its own. Expressed preferentially in kidney.

The protein resides in the cell junction. It is found in the tight junction. Its subcellular location is the cell membrane. It carries out the reaction Mg(2+)(in) = Mg(2+)(out). The enzyme catalyses Ca(2+)(in) = Ca(2+)(out). It catalyses the reaction Na(+)(in) = Na(+)(out). The catalysed reaction is K(+)(in) = K(+)(out). It carries out the reaction Rb(+)(in) = Rb(+)(out). The enzyme catalyses Cs(+)(in) = Cs(+)(out). It catalyses the reaction Li(+)(in) = Li(+)(out). Forms paracellular channels: coassembles with CLDN19 into tight junction strands with cation-selective channels through the strands, conveying epithelial permeability in a process known as paracellular tight junction permeability. Involved in the maintenance of ion gradients along the nephron. In the thick ascending limb (TAL) of Henle's loop, facilitates sodium paracellular permeability from the interstitial compartment to the lumen, contributing to the lumen-positive transepithelial potential that drives paracellular magnesium and calcium reabsorption. This is Claudin-16 (CLDN16) from Bos taurus (Bovine).